A 182-amino-acid polypeptide reads, in one-letter code: Lipid A acyltransferase PagP (182 aa).

An N-terminal signal peptide occupies residues 1–21; sequence MTQYFRSLAFFLLPVPATAMA. Cysteine 22 carries N-palmitoyl cysteine lipidation. A lipid anchor (S-diacylglycerol cysteine) is attached at cysteine 22. Residues histidine 55, aspartate 98, and serine 99 contribute to the active site.

It belongs to the lipid A palmitoyltransferase family. Homodimer.

The protein localises to the cell outer membrane. It catalyses the reaction a lipid A + a 1,2-diacyl-sn-glycero-3-phosphocholine = a hepta-acyl lipid A + a 2-acyl-sn-glycero-3-phosphocholine. The enzyme catalyses a lipid IVA + a 1,2-diacyl-sn-glycero-3-phosphocholine = a lipid IVB + a 2-acyl-sn-glycero-3-phosphocholine. The catalysed reaction is a lipid IIA + a 1,2-diacyl-sn-glycero-3-phosphocholine = a lipid IIB + a 2-acyl-sn-glycero-3-phosphocholine. Its function is as follows. Transfers a fatty acid residue from the sn-1 position of a phospholipid to the N-linked hydroxyfatty acid chain on the proximal unit of lipid A or its precursors. This Bordetella pertussis (strain CS) protein is Lipid A acyltransferase PagP.